The sequence spans 364 residues: Protein Wnt-6 (364 aa).

Residues 1–23 (MLPPVPSRLGLLLLLLCPAHVDG) form the signal peptide. 11 cysteine pairs are disulfide-bonded: C75–C86, C123–C131, C133–C171, C221–C235, C223–C230, C293–C324, C309–C319, C323–C363, C339–C354, C341–C351, and C346–C347. The N-linked (GlcNAc...) asparagine glycan is linked to N85. The disordered stretch occupies residues 140-162 (APPRPSGLLGTPGPPGPTGSPDA). A lipid anchor (O-palmitoleoyl serine; by PORCN) is attached at S227. Residue N310 is glycosylated (N-linked (GlcNAc...) asparagine).

Belongs to the Wnt family. Interacts with PORCN. In terms of processing, palmitoleoylation is required for efficient binding to frizzled receptors. Depalmitoleoylation leads to Wnt signaling pathway inhibition. In terms of tissue distribution, detected in ileum, colon and stomach (at protein level).

It localises to the secreted. It is found in the extracellular space. The protein localises to the extracellular matrix. Functionally, ligand for members of the frizzled family of seven transmembrane receptors. Probable developmental protein. May be a signaling molecule which affects the development of discrete regions of tissues. Is likely to signal over only few cell diameters. This is Protein Wnt-6 (Wnt6) from Mus musculus (Mouse).